The primary structure comprises 652 residues: Carboxypeptidase S1 homolog A (652 aa).

Positions 1-19 (MRLAASIAVALPVIGAASA) are cleaved as a signal peptide. Cys50 and Cys121 are joined by a disulfide. N-linked (GlcNAc...) asparagine glycans are attached at residues Asn77, Asn132, Asn161, Asn168, Asn184, and Asn202. Residue Ser238 is part of the active site. 4 N-linked (GlcNAc...) asparagine glycosylation sites follow: Asn260, Asn299, Asn347, and Asn410. 2 disulfides stabilise this stretch: Cys325/Cys361 and Cys332/Cys354. The active site involves Asp458. A substrate-binding site is contributed by Cys461. N-linked (GlcNAc...) asparagine glycans are attached at residues Asn474, Asn492, and Asn505. The active site involves His516. Glu517 is a substrate binding site. A glycan (N-linked (GlcNAc...) asparagine) is linked at Asn594. The segment at 608–628 (AASKGNPPPTTTSSPTASPTA) is disordered. The span at 618 to 628 (TTSSPTASPTA) shows a compositional bias: low complexity. Residue Gly629 is the site of GPI-anchor amidated glycine attachment. Positions 630 to 652 (SAMLKAPVAMLAISALTVLAFYL) are cleaved as a propeptide — removed in mature form.

This sequence belongs to the peptidase S10 family.

It is found in the cell membrane. The enzyme catalyses Preferential release of a C-terminal arginine or lysine residue.. Functionally, extracellular serine carboxypeptidase that contributes to pathogenicity. In Arthroderma benhamiae (strain ATCC MYA-4681 / CBS 112371) (Trichophyton mentagrophytes), this protein is Carboxypeptidase S1 homolog A (SCPA).